The primary structure comprises 1391 residues: DNA-directed RNA polymerase subunit beta (1391 aa).

It belongs to the RNA polymerase beta chain family. In terms of assembly, the RNAP catalytic core consists of 2 alpha, 1 beta, 1 beta' and 1 omega subunit. When a sigma factor is associated with the core the holoenzyme is formed, which can initiate transcription.

The catalysed reaction is RNA(n) + a ribonucleoside 5'-triphosphate = RNA(n+1) + diphosphate. DNA-dependent RNA polymerase catalyzes the transcription of DNA into RNA using the four ribonucleoside triphosphates as substrates. The polypeptide is DNA-directed RNA polymerase subunit beta (Granulibacter bethesdensis (strain ATCC BAA-1260 / CGDNIH1)).